Here is a 547-residue protein sequence, read N- to C-terminus: Sodium-coupled neutral amino acid transporter 4 (547 aa).

The disordered stretch occupies residues 1-30 (MDPMELRNVNIEPDDESSSGESAPDSYIGI). At 1–104 (MDPMELRNVN…GLSYAMANTG (104 aa)) the chain is on the extracellular side. Serine 49 carries the post-translational modification Phosphoserine. A helical transmembrane segment spans residues 105-125 (IILFIIMLLAVAILSLYSVHL). Residues 126–151 (LLKTAKEGGSLIYEKLGEKAFGWPGK) are Cytoplasmic-facing. Residues 152–172 (IGAFVSITMQNIGAMSSYLFI) traverse the membrane as a helical segment. Residues 173–195 (IKYELPEVIRAFMGLEENTGEWY) lie on the Extracellular side of the membrane. The helical transmembrane segment at 196-216 (LNGNYLIIFVSVGIILPLSLL) threads the bilayer. Residues 217-220 (KNLG) lie on the Cytoplasmic side of the membrane. Residues 221 to 241 (YLGYTSGFSLTCMVFFVSVVI) form a helical membrane-spanning segment. The Extracellular portion of the chain corresponds to 242 to 332 (YKKFQIPCPL…PKYFVFNSRT (91 aa)). The cysteines at positions 249 and 321 are disulfide-linked. N-linked (GlcNAc...) asparagine glycans are attached at residues asparagine 260, asparagine 264, and asparagine 276. The helical transmembrane segment at 333-353 (AYAIPILVFAFVCHPEVLPIY) threads the bilayer. The Cytoplasmic portion of the chain corresponds to 354–369 (SELKDRSRRKMQTVSN). A helical transmembrane segment spans residues 370 to 390 (ISITGMLVMYLLAALFGYLTF). Topologically, residues 391-411 (YGEVEDELLHAYSKVYTLDIP) are extracellular. A helical membrane pass occupies residues 412–432 (LLMVRLAVLVAVTLTVPIVLF). The Cytoplasmic portion of the chain corresponds to 433 to 453 (PIRTSVITLLFPKRPFSWIRH). A helical membrane pass occupies residues 454–474 (FLIAAVLIALNNVLVILVPTI). Residues 475-476 (KY) are Extracellular-facing. Residues 477-497 (IFGFIGASSATMLIFILPAVF) traverse the membrane as a helical segment. Topologically, residues 498-514 (YLKLVKKETFRSPQKVG) are cytoplasmic. Residues 515–535 (ALIFLVVGIFFMIGSMALIII) traverse the membrane as a helical segment. Over 536 to 547 (DWIYDPPNSKHH) the chain is Extracellular.

This sequence belongs to the amino acid/polyamine transporter 2 family. Post-translationally, the disulfide bond plays an important role in substrate transport, but has no effect on trafficking to the cell surface. Expressed almost exclusively in embryonic and adult liver, and at lower levels in the kidney. Expressed at lower levels in adult muscle and pancreas. Detected in fetal blood vessels. Expressed in syncytiotrophoblas of placenta during first trimester and at term. Highly expressed in first trimester placenta compared to term placenta.

The protein resides in the cell membrane. It is found in the cell projection. Its subcellular location is the microvillus membrane. The enzyme catalyses L-methionine(in) + Na(+)(in) = L-methionine(out) + Na(+)(out). It carries out the reaction L-asparagine(in) + Na(+)(in) = L-asparagine(out) + Na(+)(out). The catalysed reaction is L-threonine(in) + Na(+)(in) = L-threonine(out) + Na(+)(out). It catalyses the reaction L-serine(in) + Na(+)(in) = L-serine(out) + Na(+)(out). The enzyme catalyses glycine(in) + Na(+)(in) = glycine(out) + Na(+)(out). It carries out the reaction L-alanine(in) + Na(+)(in) = L-alanine(out) + Na(+)(out). The catalysed reaction is L-glutamine(in) + Na(+)(in) = L-glutamine(out) + Na(+)(out). It catalyses the reaction L-histidine(in) + Na(+)(in) = L-histidine(out) + Na(+)(out). The enzyme catalyses L-cysteine(in) + Na(+)(in) = L-cysteine(out) + Na(+)(out). It carries out the reaction L-proline(in) + Na(+)(in) = L-proline(out) + Na(+)(out). Symporter that cotransports neutral amino acids and sodium ions from the extraccellular to the intracellular side of the cell membrane. The transport is electrogenic, pH dependent and partially tolerates substitution of Na(+) by Li(+). Preferentially transports smaller amino acids, such as glycine, L-alanine, L-serine, L-asparagine and L-threonine, followed by L-cysteine, L-histidine, L-proline and L-glutamine and L-methionine. The sequence is that of Sodium-coupled neutral amino acid transporter 4 from Homo sapiens (Human).